A 1483-amino-acid chain; its full sequence is Neuropathy target esterase sws (1483 aa).

Over 1–34 the chain is Lumenal; it reads MDVLELLRASANGCYNTLFSDAWFQYVSKQIATT. Residues 35 to 55 traverse the membrane as a helical segment; the sequence is MYWYGALLVIGVLFIAWFLYF. At 56-1483 the chain is on the cytoplasmic side; sequence KRLARLRLRD…ENLTKTDTKN (1428 aa). 174–301 contacts a nucleoside 3',5'-cyclic phosphate; that stretch reads IFGHFEKPIF…IRVIQVIMIR (128 aa). Disordered regions lie at residues 348 to 380 and 404 to 440; these read ASRPVVRAPTSPNSRLSREEHTLSDPDPNPNAN and SSAVSVNQAGTRRSSTTYGPSGESPNGNANTAPGTSI. Residues 413–440 are compositionally biased toward polar residues; it reads GTRRSSTTYGPSGESPNGNANTAPGTSI. Residues Ser-418 and Ser-424 each carry the phosphoserine modification. A nucleoside 3',5'-cyclic phosphate-binding positions include 456–585 and 574–701; these read ELGL…VVRR and IVLD…LSHR. Positions 927–1093 constitute a PNPLA domain; it reads LVLGGGGARG…VNNLPGHLWR (167 aa). The GXGXXG motif lies at 931 to 936; sequence GGGARG. The GXSXG signature appears at 958-962; sequence GVSIG. Catalysis depends on Ser-960, which acts as the Nucleophile. Asp-1080 serves as the catalytic Proton acceptor. Positions 1080–1082 match the DGA/G motif; it reads DGG. Ser-1174 bears the Phosphoserine mark. The segment at 1349 to 1483 is disordered; it reads DKATQSTPPT…ENLTKTDTKN (135 aa). Over residues 1351 to 1373 the composition is skewed to polar residues; it reads ATQSTPPTPNKQHALSPTSSQTN. Residues 1382-1396 show a composition bias toward basic and acidic residues; the sequence is KPKEKQPSYDKLDRE. Over residues 1410–1419 the composition is skewed to low complexity; it reads ERSSMQQRDS. Basic and acidic residues predominate over residues 1445 to 1458; sequence LNKPEQQPEQKPVP. Residues 1465–1474 show a composition bias toward low complexity; that stretch reads QKQQDQQQQE.

It belongs to the NTE family. Interacts with Pka-C3; interaction inhibits the catalytic function of Pka-C3 and the esterase activity of sws.

The protein resides in the endoplasmic reticulum membrane. The catalysed reaction is a 1-acyl-sn-glycero-3-phosphocholine + H2O = sn-glycerol 3-phosphocholine + a fatty acid + H(+). In terms of biological role, phospholipase B that deacylates intracellular phosphatidylcholine (PtdCho), generating glycerophosphocholine (GroPtdCho). This deacylation occurs at both sn-2 and sn-1 positions of PtdCho. Its specific chemical modification by certain organophosphorus (OP) compounds leads to distal axonopathy. Plays a role in the signaling mechanism between neurons and glia that regulates glia wrapping during development of the adult brain. Essential for membrane lipid homeostasis and cell survival in both neurons and glia of the adult brain. This chain is Neuropathy target esterase sws, found in Drosophila virilis (Fruit fly).